Reading from the N-terminus, the 449-residue chain is Glucose-6-phosphate isomerase (449 aa).

Catalysis depends on E291, which acts as the Proton donor. Active-site residues include H312 and K426.

This sequence belongs to the GPI family.

The protein resides in the cytoplasm. It catalyses the reaction alpha-D-glucose 6-phosphate = beta-D-fructose 6-phosphate. It functions in the pathway carbohydrate biosynthesis; gluconeogenesis. The protein operates within carbohydrate degradation; glycolysis; D-glyceraldehyde 3-phosphate and glycerone phosphate from D-glucose: step 2/4. Its function is as follows. Catalyzes the reversible isomerization of glucose-6-phosphate to fructose-6-phosphate. The chain is Glucose-6-phosphate isomerase from Clostridium botulinum (strain Eklund 17B / Type B).